Here is a 1012-residue protein sequence, read N- to C-terminus: Formate dehydrogenase 2 subunit alpha (cytochrome c-553) (1012 aa).

The segment at residues 1–33 (MKTTRRSFLKLVGVSVVGLSLGQLGFDLEDAQA) is a signal peptide (tat-type signal). Positions 43-99 (AKEVGTVCPFCSVCCQVIAYVRNGKLVSTEGDPDFPVNEGALCAKGAALFSMYTNPH) constitute a 4Fe-4S Mo/W bis-MGD-type domain. Positions 50, 53, 57, and 85 each coordinate [4Fe-4S] cluster. Position 189 (selenocysteine 189) interacts with W-bis(molybdopterin guanine dinucleotide). A non-standard amino acid (selenocysteine) is located at residue selenocysteine 189. Residues threonine 389, arginine 391, lysine 394, leucine 424, and asparagine 426 each contribute to the Ca(2+) site.

Belongs to the prokaryotic molybdopterin-containing oxidoreductase family. In terms of assembly, heterotrimer of cytochrome c3 FDH2C and formate dehydrogenase FDH2 alpha and beta subunits that forms the FdhABC(3) complex. It depends on [4Fe-4S] cluster as a cofactor. Requires W-bis(molybdopterin guanine dinucleotide) as cofactor. Post-translationally, predicted to be exported by the Tat system. The position of the signal peptide cleavage has not been experimentally proven.

The protein resides in the periplasm. It carries out the reaction 2 Fe(III)-[cytochrome c553] + formate = 2 Fe(II)-[cytochrome c553] + CO2 + H(+). Its function is as follows. Alpha chain of the formate dehydrogenase (FDH) that catalyzes the reversible two-electron oxidation of formate to carbon dioxide. The alpha subunit of formate dehydrogenase forms the active site. The polypeptide is Formate dehydrogenase 2 subunit alpha (cytochrome c-553) (Nitratidesulfovibrio vulgaris (strain ATCC 29579 / DSM 644 / CCUG 34227 / NCIMB 8303 / VKM B-1760 / Hildenborough) (Desulfovibrio vulgaris)).